A 396-amino-acid chain; its full sequence is Phosphoglycerate kinase (396 aa).

Substrate-binding positions include 21 to 23 (DFN), Arg-36, 59 to 62 (HLGK), Arg-119, and Arg-156. ATP-binding positions include Lys-206, Gly-294, Glu-325, and 352–355 (GGDS).

It belongs to the phosphoglycerate kinase family. As to quaternary structure, monomer.

It localises to the cytoplasm. The enzyme catalyses (2R)-3-phosphoglycerate + ATP = (2R)-3-phospho-glyceroyl phosphate + ADP. Its pathway is carbohydrate degradation; glycolysis; pyruvate from D-glyceraldehyde 3-phosphate: step 2/5. This chain is Phosphoglycerate kinase, found in Listeria monocytogenes serotype 4b (strain CLIP80459).